A 97-amino-acid polypeptide reads, in one-letter code: Co-chaperonin GroES (97 aa).

Belongs to the GroES chaperonin family. In terms of assembly, heptamer of 7 subunits arranged in a ring. Interacts with the chaperonin GroEL.

Its subcellular location is the cytoplasm. Its function is as follows. Together with the chaperonin GroEL, plays an essential role in assisting protein folding. The GroEL-GroES system forms a nano-cage that allows encapsulation of the non-native substrate proteins and provides a physical environment optimized to promote and accelerate protein folding. GroES binds to the apical surface of the GroEL ring, thereby capping the opening of the GroEL channel. This is Co-chaperonin GroES from Serratia proteamaculans (strain 568).